A 354-amino-acid polypeptide reads, in one-letter code: mRNA cap guanine-N(7) methyltransferase 2 (354 aa).

Positions 8-286 (KPEQSHHRLF…LYATFIFQKP (279 aa)) constitute an mRNA cap 0 methyltransferase domain. Residues K21, D61, and 88–89 (DP) each bind S-adenosyl-L-methionine.

It belongs to the class I-like SAM-binding methyltransferase superfamily. mRNA cap 0 methyltransferase family.

It is found in the nucleus. The catalysed reaction is a 5'-end (5'-triphosphoguanosine)-ribonucleoside in mRNA + S-adenosyl-L-methionine = a 5'-end (N(7)-methyl 5'-triphosphoguanosine)-ribonucleoside in mRNA + S-adenosyl-L-homocysteine. Functionally, mRNA capping methyltransferase that methylates the N7 position of the added guanosine to the 5'-cap structure of mRNAs. Binds RNA containing 5'-terminal GpppC. The sequence is that of mRNA cap guanine-N(7) methyltransferase 2 from Arabidopsis thaliana (Mouse-ear cress).